Consider the following 263-residue polypeptide: Chymotrypsinogen B (263 aa).

Residues 1-18 (MASLWLLSCFSLVGAAFG) form the signal peptide. 5 disulfide bridges follow: Cys19–Cys140, Cys60–Cys76, Cys154–Cys219, Cys186–Cys200, and Cys209–Cys238. Residues 34-261 (IVNGEDAVPG…LIPWVQKILA (228 aa)) enclose the Peptidase S1 domain. His75 acts as the Charge relay system in catalysis. Ser93 is subject to Phosphoserine. Catalysis depends on Asp120, which acts as the Charge relay system. The active-site Charge relay system is the Ser213.

Belongs to the peptidase S1 family.

It localises to the secreted. The protein resides in the extracellular space. It catalyses the reaction Preferential cleavage: Tyr-|-Xaa, Trp-|-Xaa, Phe-|-Xaa, Leu-|-Xaa.. The chain is Chymotrypsinogen B from Homo sapiens (Human).